The sequence spans 648 residues: Threonine--tRNA ligase (648 aa).

Positions 1–61 (MINITFPDGA…DTDGSIEIVT (61 aa)) constitute a TGS domain. Residues 242 to 540 (DHRKLGKELD…LIETYKGAFP (299 aa)) are catalytic. The Zn(2+) site is built by Cys336, His387, and His517.

This sequence belongs to the class-II aminoacyl-tRNA synthetase family. In terms of assembly, homodimer. Zn(2+) serves as cofactor.

The protein resides in the cytoplasm. It carries out the reaction tRNA(Thr) + L-threonine + ATP = L-threonyl-tRNA(Thr) + AMP + diphosphate + H(+). Its function is as follows. Catalyzes the attachment of threonine to tRNA(Thr) in a two-step reaction: L-threonine is first activated by ATP to form Thr-AMP and then transferred to the acceptor end of tRNA(Thr). Also edits incorrectly charged L-seryl-tRNA(Thr). This is Threonine--tRNA ligase from Streptococcus uberis (strain ATCC BAA-854 / 0140J).